Reading from the N-terminus, the 315-residue chain is Olfactory receptor 5P59 (315 aa).

The Extracellular segment spans residues 1–28 (MAFLQDGNHTAVTEFILLGLTDDPVLRV). A glycan (N-linked (GlcNAc...) asparagine) is linked at Asn8. The helical transmembrane segment at 29-49 (VLFTIILCIYLVTVFGNLSTI) threads the bilayer. Residues 50-57 (LLIRVSSQ) lie on the Cytoplasmic side of the membrane. A helical membrane pass occupies residues 58-78 (LHHPMYFFLSHLASVDIGISS). At 79 to 102 (SVTPSMLVNFLLERSTISYLGCGI) the chain is on the extracellular side. Cys100 and Cys193 form a disulfide bridge. The helical transmembrane segment at 103 to 123 (QLGSADFIASVECFLLAAMAY) threads the bilayer. The Cytoplasmic segment spans residues 124 to 136 (DRFMAVCNPLLYS). The helical transmembrane segment at 137–157 (TKMSTQVCVQLVVGSYIGGFL) threads the bilayer. Residues 158–200 (NASLIVTVYFFSFLFCGPNRIDHFFCDFAPLAELSCSDVSVSV) lie on the Extracellular side of the membrane. A helical transmembrane segment spans residues 201–221 (LIISFSAGSVTMITVFVIVIS). At 222-241 (YSYILITILKMHSTEGRHKA) the chain is on the cytoplasmic side. The helical transmembrane segment at 242–262 (FSTCTSHLTAVTLYYGTITFI) threads the bilayer. Residues 263–275 (YVMPKSSFSTDQN) are Extracellular-facing. The chain crosses the membrane as a helical span at residues 276-296 (KVVSVFYMVMIPMLNPLIYSL). The Cytoplasmic portion of the chain corresponds to 297–315 (SNNEIKGALKRQLGMKTLS).

The protein belongs to the G-protein coupled receptor 1 family.

It is found in the cell membrane. Functionally, potential odorant receptor. The chain is Olfactory receptor 5P59 from Mus musculus (Mouse).